The sequence spans 358 residues: Oxidase FUB9 (358 aa).

The region spanning serine 6–alanine 350 is the FMN hydroxy acid dehydrogenase domain. An a 2-oxocarboxylate-binding site is contributed by tyrosine 32. Serine 114, glutamine 138, and threonine 166 together coordinate FMN. Residue arginine 175 participates in a 2-oxocarboxylate binding. Lysine 221 provides a ligand contact to FMN. The Proton acceptor role is filled by histidine 245. Residue arginine 248 participates in a 2-oxocarboxylate binding. Residues aspartate 276–arginine 280 and glycine 299–arginine 300 contribute to the FMN site.

The protein belongs to the FMN-dependent alpha-hydroxy acid dehydrogenase family. Requires FMN as cofactor.

The protein operates within mycotoxin biosynthesis. Its function is as follows. Oxidase; part of the gene cluster that mediates the biosynthesis of fusaric acid, a mycotoxin with low to moderate toxicity to animals and humans, but with high phytotoxic properties. L-aspartate is suggested as fusaric acid amino acid precursor that is activated and further processed to O-acetyl-L-homoserine by cluster enzymes aspartate kinase FUB3 and homoserine O-acetyltransferase FUB5, as well as enzymes of the primary metabolism. The polyketide synthase (PKS) FUB1 generates the triketide trans-2-hexenal which is presumptively released by the hydrolase FUB4 and linked to the NRPS-bound amino acid precursor by NAD(P)-dependent dehydrogenase FUB6. FUB1, FUB4, and the non-canonical NRPS Fub8 may form an enzyme complex. Further processing of the NRPS-bound intermediate might be carried out by FUB6 and the sulfhydrylase FUB7, enabling a spontaneous electrocyclization to close the carbon backbone of fusaric acid. Dihydrofusaric acid is likely to be released via reduction by the thioester reductase (TR) domain of FUB8 whereupon the final oxidation to fusaric acid may (also) be performed by the FMN-dependent dehydrogenase FUB9. In Gibberella fujikuroi (strain CBS 195.34 / IMI 58289 / NRRL A-6831) (Bakanae and foot rot disease fungus), this protein is Oxidase FUB9.